The primary structure comprises 148 residues: Large ribosomal subunit protein bL9 (148 aa).

It belongs to the bacterial ribosomal protein bL9 family.

Functionally, binds to the 23S rRNA. This Chloroflexus aurantiacus (strain ATCC 29366 / DSM 635 / J-10-fl) protein is Large ribosomal subunit protein bL9.